The sequence spans 189 residues: dTTP/UTP pyrophosphatase (189 aa).

Catalysis depends on D73, which acts as the Proton acceptor.

The protein belongs to the Maf family. YhdE subfamily. A divalent metal cation is required as a cofactor.

It is found in the cytoplasm. The enzyme catalyses dTTP + H2O = dTMP + diphosphate + H(+). It carries out the reaction UTP + H2O = UMP + diphosphate + H(+). In terms of biological role, nucleoside triphosphate pyrophosphatase that hydrolyzes dTTP and UTP. May have a dual role in cell division arrest and in preventing the incorporation of modified nucleotides into cellular nucleic acids. This Vibrio parahaemolyticus serotype O3:K6 (strain RIMD 2210633) protein is dTTP/UTP pyrophosphatase.